The chain runs to 1485 residues: MQKTPLEKASIFSQIFFSWTKPILWKGYRQRLELSDIYQIHPGDSADNLSERLEREWDREVATSKKNPKLINALKRCFFWKFLFYGILLYLGEVTKAVQPLLLGRIIASYDRDNEHERSIAYYLAIGLCLLFVVRMLLLHPAIFGLHHIGMQMRIAMFSLIYKKTLKLSSKVLDKISTGQLVSLLSNNLNKFDEGLALAHFVWIAPLQVLLLMGLLWDLLQASAFCGLGFLIILSLFQARLGRMMMKYKDKRAGKINERLVITSQIIENIQSVKAYCWENAMEKIIETIRETELKLTRKAAYVRYFNSSAFFFSGFFVVFLSIVPHLLLDGISLRKIFTTISFSIVLRMAVTRQFPWAVQTWYDSLGVINKIQEFLQKEEYKSLEYNLTTTEVAMENVSASWDEGIGEFFEKAKLEVNGGNISNEDPSAFFSNFSLHVAPVLRNINFKIEKGQLLAIAGSTGAGKTSLLMMIMGELEPSAGKIKHSGRISFSPQVSWIMPGTIKENIVFGVSYDQYRYLSVIKACQLEEDISKFPEKDNTVLGEGGITLSGGQRARISLARAVYKDADLYLLDSPFSYLDLFTEKEIFESCVCKLMANKTRILVTSKVEQLKKADKVLILHEGSCYFYGTFSELEDQRPEFSSHLIGFDHFNAERRNSIITETLRRCSIDSDPSAVRNEVKNKSFKQVADFTEKRKSSIINPRKSSRKFSLMQKSQPQMSGIEEEDMPAEQGERKLSLVPESEQGEASLPRSNFLNTGPTFQGRRRQSVLNLMTRTSISQGSNAFATRNASVRKMSVNSYSNSSFDLDIYNRRLSQDSILEVSEEINEEDLKECFLDDTDSQSPTTTWNTYLRFLTAHKNFIFILVFCLVIFFVEVAASSAWLWIIKRNAPAINMTSNENVSEVSDTLSVIVTHTSFYYVFYIYVGVADSLLALGIFRGLPLVHSLISVSKVLHKKMLHAILHAPMSTFNTMRAGRILNRFSKDTAILDDILPLSIFDLTQLVLIVIGAITVVSLLEPYIFLATVPVIVAFILLRSYFLHTSQQLKQLESKARSPIFAHLITSLKGLWTLRAFGRQPYFETLFHKALNLHTANWFLYLSTLRWFQMTIEMIFVIFFIAVSFISIATSGAGEEKVGIVLTLAMNIMNTLQWAVNASIDVDSLMRSVSRIFRFIDLPVEELINENKNKEEQLSEVLIYENDYVKKTQVWPSGGQMTVKNLSANYIDGGNTVLENISFSLSPGQRVGLLGRTGSGKSTLLSAFLRLLSTQGDIQIDGVSWQTIPLQKWRKAFGVIPQKVFIFSGSIRKNLDPYGKWSDEELLKVTEEVGLKLIIDQFPGQLDFVLLDGGCVLSHGHKQLVCLARSVLSKAKILLLDEPSAHLDPITFQIIRKTLKHAFADCTVILSEHRLEAMLECQRFLVIEDNTVRQYDSIQKLVNEKSFFKQAISHSDRLKLFPLHRRNSSKRKSRPQISALQEETEEEVQDTRL.

At 1-78 (MQKTPLEKAS…KLINALKRCF (78 aa)) the chain is on the cytoplasmic side. The helical transmembrane segment at 79-99 (FWKFLFYGILLYLGEVTKAVQ) threads the bilayer. The region spanning 82–366 (FLFYGILLYL…WAVQTWYDSL (285 aa)) is the ABC transmembrane type-1 1 domain. Residues 100–123 (PLLLGRIIASYDRDNEHERSIAYY) are Extracellular-facing. The helical transmembrane segment at 124-147 (LAIGLCLLFVVRMLLLHPAIFGLH) threads the bilayer. The Cytoplasmic segment spans residues 148–196 (HIGMQMRIAMFSLIYKKTLKLSSKVLDKISTGQLVSLLSNNLNKFDEGL). A helical transmembrane segment spans residues 197 to 217 (ALAHFVWIAPLQVLLLMGLLW). At 218-223 (DLLQAS) the chain is on the extracellular side. A helical transmembrane segment spans residues 224–244 (AFCGLGFLIILSLFQARLGRM). Over 245–299 (MMKYKDKRAGKINERLVITSQIIENIQSVKAYCWENAMEKIIETIRETELKLTRK) the chain is Cytoplasmic. The chain crosses the membrane as a helical span at residues 300–320 (AAYVRYFNSSAFFFSGFFVVF). Residues 321–340 (LSIVPHLLLDGISLRKIFTT) are Extracellular-facing. Residues 341–359 (ISFSIVLRMAVTRQFPWAV) traverse the membrane as a helical segment. Residues 360–860 (QTWYDSLGVI…YLRFLTAHKN (501 aa)) are Cytoplasmic-facing. ATP is bound by residues tryptophan 402, serine 435, 459 to 466 (GSTGAGKT), and glutamine 494. One can recognise an ABC transporter 1 domain in the interval 422-647 (ISNEDPSAFF…RPEFSSHLIG (226 aa)). The interval 652–833 (NAERRNSIIT…EEINEEDLKE (182 aa)) is disordered R region. Residues 750 to 760 (PRSNFLNTGPT) are compositionally biased toward polar residues. Residues 861–881 (FIFILVFCLVIFFVEVAASSA) form a helical membrane-spanning segment. Residues 880-1163 (SAWLWIIKRN…ASIDVDSLMR (284 aa)) enclose the ABC transmembrane type-1 2 domain. At 882–923 (WLWIIKRNAPAINMTSNENVSEVSDTLSVIVTHTSFYYVFYI) the chain is on the extracellular side. Asparagine 894 and asparagine 900 each carry an N-linked (GlcNAc...) asparagine glycan. The discontinuously helical transmembrane segment at 924 to 944 (YVGVADSLLALGIFRGLPLVH) threads the bilayer. Residues 945 to 995 (SLISVSKVLHKKMLHAILHAPMSTFNTMRAGRILNRFSKDTAILDDILPLS) lie on the Cytoplasmic side of the membrane. The chain crosses the membrane as a helical span at residues 996–1016 (IFDLTQLVLIVIGAITVVSLL). Residues 1017–1018 (EP) lie on the Extracellular side of the membrane. The helical transmembrane segment at 1019–1039 (YIFLATVPVIVAFILLRSYFL) threads the bilayer. Over 1040–1100 (HTSQQLKQLE…TANWFLYLST (61 aa)) the chain is Cytoplasmic. The chain crosses the membrane as a helical span at residues 1101 to 1121 (LRWFQMTIEMIFVIFFIAVSF). At 1122 to 1135 (ISIATSGAGEEKVG) the chain is on the extracellular side. A helical transmembrane segment spans residues 1136-1156 (IVLTLAMNIMNTLQWAVNASI). Topologically, residues 1157-1485 (DVDSLMRSVS…TEEEVQDTRL (329 aa)) are cytoplasmic. An ABC transporter 2 domain is found at 1213–1446 (MTVKNLSANY…KSFFKQAISH (234 aa)). ATP-binding positions include tyrosine 1222 and 1247–1254 (GRTGSGKS). A disordered region spans residues 1458–1485 (RNSSKRKSRPQISALQEETEEEVQDTRL). A compositionally biased stretch (acidic residues) spans 1474–1485 (EETEEEVQDTRL). The short motif at 1483–1485 (TRL) is the PDZ-binding element.

The protein belongs to the ABC transporter superfamily. ABCC family. CFTR transporter (TC 3.A.1.202) subfamily. In terms of assembly, monomer; does not require oligomerization for channel activity. May form oligomers in the membrane. Phosphorylated; cAMP treatment promotes phosphorylation and activates the channel. Dephosphorylation decreases the ATPase activity (in vitro). Phosphorylation at PKA sites activates the channel. Phosphorylation at PKC sites enhances the response to phosphorylation by PKA.

Its subcellular location is the apical cell membrane. The protein localises to the early endosome membrane. It is found in the cell membrane. It localises to the recycling endosome membrane. The protein resides in the endoplasmic reticulum membrane. The enzyme catalyses ATP + H2O + closed Cl(-) channel = ADP + phosphate + open Cl(-) channel.. The catalysed reaction is chloride(in) = chloride(out). It carries out the reaction hydrogencarbonate(in) = hydrogencarbonate(out). It catalyses the reaction ATP + H2O = ADP + phosphate + H(+). Its function is as follows. Epithelial ion channel that plays an important role in the regulation of epithelial ion and water transport and fluid homeostasis. Mediates the transport of chloride ions across the cell membrane. Possesses an intrinsic ATPase activity and utilizes ATP to gate its channel; the passive flow of anions through the channel is gated by cycles of ATP binding and hydrolysis by the ATP-binding domains. The ion channel is also permeable to HCO(3)(-); selectivity depends on the extracellular chloride concentration. Exerts its function also by modulating the activity of other ion channels and transporters. Contributes to the regulation of the pH and the ion content of the epithelial fluid layer. The polypeptide is Cystic fibrosis transmembrane conductance regulator (Xenopus laevis (African clawed frog)).